Consider the following 162-residue polypeptide: UPF0114 protein PSEEN0819 (162 aa).

3 helical membrane passes run 15–35 (LLAP…LKFF), 53–73 (LVLV…LVMV), and 136–156 (LMWY…MGYL).

This sequence belongs to the UPF0114 family.

The protein localises to the cell membrane. The polypeptide is UPF0114 protein PSEEN0819 (Pseudomonas entomophila (strain L48)).